The following is a 437-amino-acid chain: Transcription factor E2F1 (437 aa).

Disordered regions lie at residues 42–87 and 101–128; these read ASAP…GRPP and LAESSGPARGRGRHPGKGVKSPGEKSRY. The tract at residues 67 to 108 is cyclin A:CDK2 binding; the sequence is ATPQAPRPTPSAPRPALGRPPVKRRLDLETDHQYLAESSGPA. The tract at residues 89–191 is interaction with BIRC2/c-IAP1; that stretch reads KRRLDLETDH…KKSKNHIQWL (103 aa). A DNA-binding region spans residues 110 to 194; that stretch reads GRGRHPGKGV…KNHIQWLGSH (85 aa). N6-acetyllysine is present on residues K117, K120, and K125. Positions 153 to 174 are leucine-zipper; sequence LNWAAEVLKVQKRRIYDITNVL. The short motif at 158–194 is the DEF box element; the sequence is EVLKVQKRRIYDITNVLEGIQLIAKKSKNHIQWLGSH. K185 is modified (N6-methyllysine; by SETD7). Positions 192–382 are required for interaction with TRIM28; sequence GSHTTVGVGG…RLSPLVAADS (191 aa). The dimerization stretch occupies residues 195–284; the sequence is TTVGVGGRLE…AVDSSENFQI (90 aa). The segment at 300 to 349 is disordered; it reads EETVGGISPGKTPSQEVTSEEENRATDSATIVSPPPSSPPSSLTTDPSQS. Positions 339–349 are enriched in low complexity; sequence PSSLTTDPSQS. A Phosphoserine; by CHEK2 modification is found at S364. The transactivation stretch occupies residues 368–437; the sequence is PVDEDRLSPL…DFGDLTPLDF (70 aa). S375 carries the post-translational modification Phosphoserine. S403 is subject to Phosphoserine; by GSK3-beta. An RB1 binding region spans residues 409 to 426; the sequence is LDYHFGLEEGEGIRDLFD. T433 carries the phosphothreonine; by GSK3-beta modification.

This sequence belongs to the E2F/DP family. As to quaternary structure, component of the DRTF1/E2F transcription factor complex. Forms heterodimers with DP family members. The E2F1 complex binds specifically hypophosphorylated RB1, the interaction represses E2F1-driven transcription. During the cell cycle, RB1 becomes phosphorylated in mid-to-late G1 phase, detaches from the DRTF1/E2F complex, rendering E2F transcriptionally active. Viral oncoproteins, notably E1A, T-antigen and HPV E7, are capable of sequestering RB1, thus releasing the active complex. Interacts with TRRAP, which probably mediates its interaction with histone acetyltransferase complexes, leading to transcription activation. Binds TOPBP1 and EAPP. Interacts with ARID3A. Interacts with TRIM28; the interaction inhibits E2F1 acetylation through recruiting HDAC1 and represses its transcriptional activity. Interaction with KAT2B; the interaction acetylates E2F1 enhancing its DNA-binding and transcriptional activity. Interacts with BIRC2/c-IAP1 (via BIR domains). The complex TFDP1:E2F1 interacts with CEBPA; the interaction prevents CEBPA binding to target genes promoters and represses its transcriptional activity. Interacts with RRP1B. Interacts with HCFC1. Interacts with KMT2E; the interaction is probably indirect and is mediated via HCFC1. Interacts with DCAF5 and L3MBTL3; the interaction requires methylation at Lys-185 and is necessary to target E2F1 for ubiquitination by the CRL4-DCAF5 E3 ubiquitin ligase complex. In terms of assembly, (Microbial infection) Interacts with human cytomegalovirus/HHV-5 protein UL123. Post-translationally, phosphorylated by CDK2 and cyclin A-CDK2 in the S-phase. Phosphorylation at Ser-364 by CHEK2 stabilizes E2F1 upon DNA damage and regulates its effect on transcription and apoptosis. Phosphorylation at Ser-403 by GSK3B promotes interaction with USP11, leading to its deubiquitination and stabilization. Ubiquitinated via 'Lys-63'-linked ubiquitin, leading to its degradation. Deubiquitinated by USP11 following phosphorylation by GSK3B, promoting its stability. In terms of processing, acetylation stimulates DNA-binding. Enhanced under stress conditions such as DNA damage and inhibited by retinoblastoma protein RB1. Regulated by KAP1/TRIM28 which recruits HDAC1 to E2F1 resulting in deacetylation. Acetylated by P/CAF/KAT2B. Post-translationally, methylation at Lys-185 by SETD7 promotes E2F1 ubiquitin-dependent proteasomal degradation.

It localises to the nucleus. With respect to regulation, BIRC2/c-IAP1 stimulates its transcriptional activity. In terms of biological role, transcription activator that binds DNA cooperatively with DP proteins through the E2 recognition site, 5'-TTTC[CG]CGC-3' found in the promoter region of a number of genes whose products are involved in cell cycle regulation or in DNA replication. The DRTF1/E2F complex functions in the control of cell-cycle progression from G1 to S phase. E2F1 binds preferentially RB1 in a cell-cycle dependent manner. It can mediate both cell proliferation and TP53/p53-dependent apoptosis. Blocks adipocyte differentiation by binding to specific promoters repressing CEBPA binding to its target gene promoters. Directly activates transcription of PEG10. Positively regulates transcription of RRP1B. The chain is Transcription factor E2F1 from Homo sapiens (Human).